The sequence spans 208 residues: ATP-dependent Clp protease proteolytic subunit (208 aa).

Residue S107 is the Nucleophile of the active site. Residue H132 is part of the active site.

The protein belongs to the peptidase S14 family. In terms of assembly, fourteen ClpP subunits assemble into 2 heptameric rings which stack back to back to give a disk-like structure with a central cavity, resembling the structure of eukaryotic proteasomes.

Its subcellular location is the cytoplasm. The enzyme catalyses Hydrolysis of proteins to small peptides in the presence of ATP and magnesium. alpha-casein is the usual test substrate. In the absence of ATP, only oligopeptides shorter than five residues are hydrolyzed (such as succinyl-Leu-Tyr-|-NHMec, and Leu-Tyr-Leu-|-Tyr-Trp, in which cleavage of the -Tyr-|-Leu- and -Tyr-|-Trp bonds also occurs).. In terms of biological role, cleaves peptides in various proteins in a process that requires ATP hydrolysis. Has a chymotrypsin-like activity. Plays a major role in the degradation of misfolded proteins. This Methylorubrum extorquens (strain CM4 / NCIMB 13688) (Methylobacterium extorquens) protein is ATP-dependent Clp protease proteolytic subunit.